A 152-amino-acid polypeptide reads, in one-letter code: Lipoprotein signal peptidase (152 aa).

A run of 3 helical transmembrane segments spans residues 5–25, 61–81, and 84–104; these read LFVL…FWIV, WFFV…LATH, and LNIW…GNFI. Residues D114 and D130 contribute to the active site. The helical transmembrane segment at 125–145 threads the bilayer; that stretch reads IFNVADSYLTVGVILLLICLW.

This sequence belongs to the peptidase A8 family.

Its subcellular location is the cell membrane. It catalyses the reaction Release of signal peptides from bacterial membrane prolipoproteins. Hydrolyzes -Xaa-Yaa-Zaa-|-(S,diacylglyceryl)Cys-, in which Xaa is hydrophobic (preferably Leu), and Yaa (Ala or Ser) and Zaa (Gly or Ala) have small, neutral side chains.. It participates in protein modification; lipoprotein biosynthesis (signal peptide cleavage). Functionally, this protein specifically catalyzes the removal of signal peptides from prolipoproteins. This chain is Lipoprotein signal peptidase, found in Streptococcus pyogenes serotype M1.